Here is a 187-residue protein sequence, read N- to C-terminus: ATP synthase subunit b 2 (187 aa).

Basic and acidic residues predominate over residues 1-12 (MAQERAEHESAD). Positions 1–31 (MAQERAEHESADQHTTSTGVPHEGQGEPFPP) are disordered. Residues 40–60 (LLIWLAISFLLLYALMSKLVL) traverse the membrane as a helical segment.

Belongs to the ATPase B chain family. As to quaternary structure, F-type ATPases have 2 components, F(1) - the catalytic core - and F(0) - the membrane proton channel. F(1) has five subunits: alpha(3), beta(3), gamma(1), delta(1), epsilon(1). F(0) has three main subunits: a(1), b(2) and c(10-14). The alpha and beta chains form an alternating ring which encloses part of the gamma chain. F(1) is attached to F(0) by a central stalk formed by the gamma and epsilon chains, while a peripheral stalk is formed by the delta and b chains.

It is found in the cell inner membrane. F(1)F(0) ATP synthase produces ATP from ADP in the presence of a proton or sodium gradient. F-type ATPases consist of two structural domains, F(1) containing the extramembraneous catalytic core and F(0) containing the membrane proton channel, linked together by a central stalk and a peripheral stalk. During catalysis, ATP synthesis in the catalytic domain of F(1) is coupled via a rotary mechanism of the central stalk subunits to proton translocation. Functionally, component of the F(0) channel, it forms part of the peripheral stalk, linking F(1) to F(0). The b'-subunit is a diverged and duplicated form of b found in plants and photosynthetic bacteria. This chain is ATP synthase subunit b 2 (atpF2), found in Beijerinckia indica subsp. indica (strain ATCC 9039 / DSM 1715 / NCIMB 8712).